Here is a 248-residue protein sequence, read N- to C-terminus: 14-3-3 protein zeta (248 aa).

The protein belongs to the 14-3-3 family. In terms of assembly, homodimer; homodimerization is not essential for modulating the activity of Slo. Interacts with phosphorylated Slob; the interaction with Slob mediates an indirect interaction with Slo. Interacts with phosphorylated yki. Interacts with hemo; this represses 14-3-3zeta activity which prevents the 14-3-3zeta-mediated activation of phosphoinositide 3-kinase Pi3K68D. This, in turn, inhibits the Pi3K68D-mediated conversion of phosphatidylinositol to phosphatidylinositol-3-phosphate and prevents progression of early endosomes through the maturation process which regulates subsequent steps of phagocytic processing. Interacts with REPTOR (when phosphorylated), this interaction may assist the cytoplasmic retention of REPTOR. In terms of tissue distribution, predominantly expressed in the ventral nerve cord of the embryo, and in the neural tissues of the head. Also found in the region posterior to the morphogenetic furrow of the eye imaginal disk where cells differentiate as photoreceptors.

Its subcellular location is the cytoplasm. It is found in the early endosome. Its function is as follows. Required in Raf-dependent cell proliferation and photoreceptor differentiation during eye development. Acts upstream of Raf and downstream of Ras, and is essential for viability. Acts as a negative regulator of the slo calcium channel via its interaction with slo-binding protein slob. Inhibits yki activity by restricting its nuclear localization. Binds to and promotes the activity of phosphoinositide 3-kinase Pi3K68D which converts phosphatidylinositol to phosphatidylinositol-3-phosphate and promotes maturation of early endosomes. In Drosophila melanogaster (Fruit fly), this protein is 14-3-3 protein zeta (14-3-3zeta).